A 295-amino-acid polypeptide reads, in one-letter code: Non-selective voltage-gated ion channel VDAC2 (295 aa).

The ATP site is built by K24 and K32. Position 32 is an N6-acetyllysine; alternate (K32). K32 is subject to N6-succinyllysine; alternate. A Glycyl lysine isopeptide (Lys-Gly) (interchain with G-Cter in ubiquitin); alternate cross-link involves residue K32. 2 consecutive transmembrane segments (beta stranded) span residues 38 to 47 (LVKLDVKTKS) and 51 to 59 (VEFSTSGSS). K65 is covalently cross-linked (Glycyl lysine isopeptide (Lys-Gly) (interchain with G-Cter in ubiquitin)). The chain crosses the membrane as a beta stranded span at residues 66-76 (VSGTLETKYKW). Residue Y79 is modified to Phosphotyrosine. Transmembrane regions (beta stranded) follow at residues 81-88 (LTFTEKWN), 92-101 (TLGTEIAIED), and 107-116 (LKLTFDTTFS). T119 bears the Phosphothreonine mark. Position 121 is an N6-acetyllysine; alternate (K121). K121 is covalently cross-linked (Glycyl lysine isopeptide (Lys-Gly) (interchain with G-Cter in ubiquitin); alternate). A Glycyl lysine isopeptide (Lys-Gly) (interchain with G-Cter in ubiquitin) cross-link involves residue K122. 4 beta stranded membrane passes run 123–132 (SGKIKSAYKR), 135–142 (INLGCDVD), 149–157 (AIHGSAVFG), and 162–170 (LAGYQMTFD). A Glycyl lysine isopeptide (Lys-Gly) (interchain with G-Cter in ubiquitin) cross-link involves residue K173. 6 consecutive transmembrane segments (beta stranded) span residues 175–187 (KLTR…GYRT), 190–197 (FQLHTNVN), 201–210 (EFGGSIYQKV), 214–223 (FDTSVNLAWT), 230–239 (RFGIAAKYQL), and 243–250 (ASISAKVN). Phosphotyrosine is present on Y237. Phosphoserine is present on S252. NAD(+)-binding positions include 254–256 (LIG) and 272–276 (SALVD). 2 beta stranded membrane-spanning segments follow: residues 254–263 (LIGVGYTQTL) and 266–275 (GVKLTLSALV). Residue K278 is modified to N6-acetyllysine; alternate. A Glycyl lysine isopeptide (Lys-Gly) (interchain with G-Cter in ubiquitin); alternate cross-link involves residue K278. A beta stranded membrane pass occupies residues 285–294 (HKLGLALELE).

This sequence belongs to the eukaryotic mitochondrial porin family. Monomer, homodimer and higher order oligomers; formation of higher order structures is necessary for scramblase activity. Interacts with ARMC12 in a TBC1D21-dependent manner. Interacts with KLC3. Interacts with SPATA33. Interacts with PPP3CC in a SPATA33-dependent manner. Post-translationally, ubiquitinated by PRKN during mitophagy, leading to its degradation and enhancement of mitophagy. Deubiquitinated by USP30. Highly expressed in heart, kidney, brain and ascitic tumor with very low levels in liver. Expressed in the head region of epididymal sperm.

The protein resides in the mitochondrion outer membrane. The protein localises to the membrane. The catalysed reaction is chloride(in) = chloride(out). The enzyme catalyses K(+)(in) = K(+)(out). It catalyses the reaction a 1,2-diacyl-sn-glycero-3-phospho-L-serine(in) = a 1,2-diacyl-sn-glycero-3-phospho-L-serine(out). It carries out the reaction a 1,2-diacyl-sn-glycero-3-phosphocholine(in) = a 1,2-diacyl-sn-glycero-3-phosphocholine(out). The catalysed reaction is a 1,2-diacyl-sn-glycero-3-phospho-(1D-myo-inositol)(in) = a 1,2-diacyl-sn-glycero-3-phospho-(1D-myo-inositol)(out). Non-selective voltage-gated ion channel that mediates the transport of anions and cations through the mitochondrion outer membrane and plasma membrane. The channel adopts an open conformation at zero mV and a closed conformation at both positive and negative potentials. There are two populations of channels; the main that functions in a lower open-state conductance with lower ion selectivity, that switch, in a voltage-dependent manner, from the open to a low-conducting 'closed' state and the other that has a normal ion selectivity in the typical high conductance, 'open' state. Binds various lipids, including the sphingolipid ceramide, the phospholipid phosphatidylcholine, and the sterols cholesterol and oxysterol. Binding of ceramide promotes the mitochondrial outer membrane permeabilization (MOMP) apoptotic pathway. In terms of biological role, catalyzes the scrambling of phospholipids across the outer mitochondrial membrane; the mechanism is unrelated to channel activity and is capable of translocating both anionic and zwitterionic phospholipids. The protein is Non-selective voltage-gated ion channel VDAC2 of Rattus norvegicus (Rat).